The primary structure comprises 444 residues: Probable D-serine dehydratase (444 aa).

Lysine 110 is modified (N6-(pyridoxal phosphate)lysine).

It belongs to the serine/threonine dehydratase family. DsdA subfamily. Requires pyridoxal 5'-phosphate as cofactor.

The enzyme catalyses D-serine = pyruvate + NH4(+). This Burkholderia thailandensis (strain ATCC 700388 / DSM 13276 / CCUG 48851 / CIP 106301 / E264) protein is Probable D-serine dehydratase.